The sequence spans 594 residues: Gamma-terpinene synthase, chloroplastic (594 aa).

The N-terminal 44 residues, 1–44, are a transit peptide targeting the chloroplast; that stretch reads MATLSMQVSILSKEVKNVNNIGMRASKPMVARRVSTTRLRPICS. Mn(2+)-binding residues include D347 and D351. The DDXXD motif motif lies at 347–351; sequence DDVYD. 2 homodimerization regions span residues 353 to 359 and 425 to 462; these read YGTLDEL and EAKW…FTLP. Residues D491 and E499 each contribute to the Mn(2+) site.

Belongs to the terpene synthase family. Homodimer. It depends on Mn(2+) as a cofactor. Mg(2+) is required as a cofactor. In terms of tissue distribution, expressed in peltate glandular trichomes.

The protein localises to the plastid. Its subcellular location is the chloroplast. The catalysed reaction is (2E)-geranyl diphosphate = gamma-terpinene + diphosphate. The enzyme catalyses (2E)-geranyl diphosphate = alpha-terpinene + diphosphate. Its pathway is secondary metabolite biosynthesis; terpenoid biosynthesis. Its function is as follows. Involved in the biosynthesis of phenolic monoterpenes natural products thymol and carvacrol which have a broad range of biological activities acting as antimicrobial compounds, insecticides, antioxidants and pharmaceutical agents. Monoterpene synthase which catalyzes the conversion of geranyl diphosphate (GPP) to gamma-terpinene and the minor products alpha-thujene, alpha-terpinene, myrcene, sabinene, (+)-R-limonene, alpha-pinene and alpha-phellandrene. This Origanum vulgare (Wild marjoram) protein is Gamma-terpinene synthase, chloroplastic.